A 58-amino-acid chain; its full sequence is KappaPI-actitoxin-Avd3b (58 aa).

In terms of domain architecture, BPTI/Kunitz inhibitor spans 5 to 55 (CLLPMDVGRCRASHPRYYYNSSSKRCEKFIYGGCRGNANNFHTLEECEKVC). Cystine bridges form between C5–C55, C14–C38, and C30–C51.

It belongs to the venom Kunitz-type family. Sea anemone type 2 potassium channel toxin subfamily.

Its subcellular location is the secreted. The protein resides in the nematocyst. Dual-function toxin that inhibits both the serine protease trypsin (Kd&lt;30 nM) and voltage-gated potassium channels Kv1.2/KCNA2 (IC(50)=2800 nM). This chain is KappaPI-actitoxin-Avd3b, found in Anemonia sulcata (Mediterranean snakelocks sea anemone).